The chain runs to 366 residues: Phenylalanine--tRNA ligase alpha subunit (366 aa).

Position 259 (Glu259) interacts with Mg(2+).

This sequence belongs to the class-II aminoacyl-tRNA synthetase family. Phe-tRNA synthetase alpha subunit type 1 subfamily. Tetramer of two alpha and two beta subunits. It depends on Mg(2+) as a cofactor.

It localises to the cytoplasm. It carries out the reaction tRNA(Phe) + L-phenylalanine + ATP = L-phenylalanyl-tRNA(Phe) + AMP + diphosphate + H(+). The protein is Phenylalanine--tRNA ligase alpha subunit of Erythrobacter litoralis (strain HTCC2594).